Here is a 423-residue protein sequence, read N- to C-terminus: Histidine--tRNA ligase (423 aa).

It belongs to the class-II aminoacyl-tRNA synthetase family. In terms of assembly, homodimer.

The protein resides in the cytoplasm. The catalysed reaction is tRNA(His) + L-histidine + ATP = L-histidyl-tRNA(His) + AMP + diphosphate + H(+). In Halorhodospira halophila (strain DSM 244 / SL1) (Ectothiorhodospira halophila (strain DSM 244 / SL1)), this protein is Histidine--tRNA ligase.